We begin with the raw amino-acid sequence, 61 residues long: Probradykinin-2 (61 aa).

Residues 1-22 (MSFLKKSLFLVLFLGLVSFSIC) form the signal peptide. A propeptide spanning residues 23–50 (EEEKRETEEEENEDEIEEQSEEKKRFEP) is cleaved from the precursor. Positions 24–61 (EEKRETEEEENEDEIEEQSEEKKRFEPVPPGFTPFRQT) are disordered. Residues 30 to 42 (EEEENEDEIEEQS) are compositionally biased toward acidic residues. P52 is modified (4-hydroxyproline).

It belongs to the frog skin active peptide (FSAP) family. Bradykinin-related peptide subfamily. In terms of tissue distribution, expressed by the skin glands.

The protein localises to the secreted. In terms of biological role, may produce in vitro relaxation of rat arterial smooth muscle and constriction of intestinal smooth muscle. May target bradykinin receptors (BDKRB). The protein is Probradykinin-2 of Pithecopus azureus (Orange-legged monkey tree frog).